A 380-amino-acid chain; its full sequence is N-acetylcysteine deacetylase (380 aa).

Residues cysteine 98, histidine 100, glutamate 134, histidine 158, and histidine 350 each coordinate Ni(2+).

Belongs to the peptidase M20 family. A divalent metal cation is required as a cofactor.

The catalysed reaction is N-acetyl-L-cysteine + H2O = L-cysteine + acetate. Its pathway is amino-acid biosynthesis; L-cysteine biosynthesis. In terms of biological role, probably catalyzes the deacetylation of N-acetylcysteine (NAC) to acetate and cysteine. Is involved in a S-(2-succino)cysteine (2SC) degradation pathway that allows B.subtilis to grow on 2SC as a sole sulfur source, via its metabolization to cysteine. The sequence is that of N-acetylcysteine deacetylase from Bacillus subtilis (strain 168).